Here is a 1443-residue protein sequence, read N- to C-terminus: Lysophospholipase NTE1 (1443 aa).

Over 1–59 the chain is Lumenal; sequence MEEELAIEDLPRLTGTVSLNNGLLHSIYNETTVFKILRWSLVEIPKYILKLMSKNLEIN. The chain crosses the membrane as a helical span at residues 60–80; the sequence is LNVSSILIITLLIAAGILVIV. Residues 81 to 1443 are Cytoplasmic-facing; the sequence is RYKFLTGYSE…RIKMYRRNTM (1363 aa). Positions 103 to 118 are enriched in polar residues; the sequence is ALGQQSTNYPKSTSSG. Disordered regions lie at residues 103 to 122 and 199 to 251; these read ALGQ…LFVE and KYDE…GKMH. Over residues 210–235 the composition is skewed to acidic residues; the sequence is EGEEADEDDEEEEKEVGDDGDDEMDV. Residues 619-750 and 746-871 each bind a nucleoside 3',5'-cyclic phosphate; these read LYKR…LKSL and KLKS…VASK. One can recognise a PNPLA domain in the interval 1136-1300; it reads LVLGGGGSRG…LDNLPVMEMK (165 aa). Positions 1140–1145 match the GXGXXG motif; the sequence is GGGSRG. Positions 1167-1171 match the GXSXG motif; sequence GTSIG. S1169 serves as the catalytic Nucleophile. The active-site Proton acceptor is D1287. Positions 1287–1289 match the DGA/G motif; that stretch reads DGG.

This sequence belongs to the NTE family.

It is found in the endoplasmic reticulum membrane. The catalysed reaction is a 1-acyl-sn-glycero-3-phosphocholine + H2O = sn-glycerol 3-phosphocholine + a fatty acid + H(+). Inhibited by organophosphorus esters. Functionally, intracellular phospholipase B that catalyzes the double deacylation of phosphatidylcholine (PC) to glycerophosphocholine (GroPCho). Plays an important role in membrane lipid homeostasis. Responsible for the rapid PC turnover in response to inositol, elevated temperatures, or when choline is present in the growth medium. This is Lysophospholipase NTE1 (NTE1) from Lodderomyces elongisporus (strain ATCC 11503 / CBS 2605 / JCM 1781 / NBRC 1676 / NRRL YB-4239) (Yeast).